The sequence spans 492 residues: Katanin p60 ATPase-containing subunit A1 (492 aa).

Residues 80 to 186 (STPPKASQQE…ESEPKKFDST (107 aa)) are disordered. Residues 145 to 171 (PNDKGKAVRGREKKDQQNKGKEEKSKS) show a composition bias toward basic and acidic residues. 250-257 (GPPGTGKT) is an ATP binding site.

The protein belongs to the AAA ATPase family. Katanin p60 subunit A1 subfamily. As to quaternary structure, can homooligomerize into hexameric rings, which may be promoted by interaction with microtubules. Interacts with KATNB1, which may serve as a targeting subunit.

Its subcellular location is the cytoplasm. It localises to the cytoskeleton. The protein resides in the microtubule organizing center. It is found in the centrosome. The protein localises to the spindle pole. Its subcellular location is the spindle. It catalyses the reaction n ATP + n H2O + a microtubule = n ADP + n phosphate + (n+1) alpha/beta tubulin heterodimers.. Its activity is regulated as follows. ATPase activity is stimulated by microtubules, which promote homooligomerization. ATP-dependent microtubule severing is stimulated by interaction with KATNB1. Functionally, catalytic subunit of a complex which severs microtubules in an ATP-dependent manner. Microtubule severing may promote rapid reorganization of cellular microtubule arrays and the release of microtubules from the centrosome following nucleation. The polypeptide is Katanin p60 ATPase-containing subunit A1 (Gallus gallus (Chicken)).